We begin with the raw amino-acid sequence, 211 residues long: Superoxide dismutase [Fe] (211 aa).

4 residues coordinate Fe cation: H31, H79, D165, and H169.

The protein belongs to the iron/manganese superoxide dismutase family. In terms of assembly, homotetramer. Requires Fe cation as cofactor.

The catalysed reaction is 2 superoxide + 2 H(+) = H2O2 + O2. Destroys superoxide anion radicals which are normally produced within the cells and which are toxic to biological systems. This chain is Superoxide dismutase [Fe] (sod), found in Pyrobaculum aerophilum (strain ATCC 51768 / DSM 7523 / JCM 9630 / CIP 104966 / NBRC 100827 / IM2).